Consider the following 183-residue polypeptide: Hypoxanthine/guanine phosphoribosyltransferase (183 aa).

The protein belongs to the purine/pyrimidine phosphoribosyltransferase family. Archaeal HPRT subfamily. As to quaternary structure, homodimer.

It is found in the cytoplasm. The catalysed reaction is IMP + diphosphate = hypoxanthine + 5-phospho-alpha-D-ribose 1-diphosphate. It carries out the reaction GMP + diphosphate = guanine + 5-phospho-alpha-D-ribose 1-diphosphate. The protein operates within purine metabolism; IMP biosynthesis via salvage pathway; IMP from hypoxanthine: step 1/1. In terms of biological role, catalyzes a salvage reaction resulting in the formation of IMP that is energically less costly than de novo synthesis. The sequence is that of Hypoxanthine/guanine phosphoribosyltransferase from Methanocaldococcus jannaschii (strain ATCC 43067 / DSM 2661 / JAL-1 / JCM 10045 / NBRC 100440) (Methanococcus jannaschii).